The following is a 385-amino-acid chain: Lysine 6-dehydrogenase (385 aa).

Belongs to the saccharopine dehydrogenase family. Homohexamer.

It carries out the reaction L-lysine + NAD(+) = L-1-piperideine-6-carboxylate + NH4(+) + NADH + 2 H(+). Its function is as follows. Catalyzes the oxidative deamination of L-lysine in the presence of NAD. Can also use (S)-(2-aminoethyl)-L-cysteine as a substrate, but more slowly. Can use both NAD and NADP but the preferred substrate is NAD. The protein is Lysine 6-dehydrogenase (lysDH) of Geobacillus stearothermophilus (Bacillus stearothermophilus).